The following is a 216-amino-acid chain: Neural cell adhesion molecule L1.2 (216 aa).

In terms of domain architecture, Fibronectin type-III spans Glu-1–Val-64. The Extracellular portion of the chain corresponds to Glu-1–Trp-73. 2 N-linked (GlcNAc...) asparagine glycosylation sites follow: Asn-22 and Asn-46. The helical transmembrane segment at Phe-74–Ile-94 threads the bilayer. At Lys-95 to Asp-216 the chain is on the cytoplasmic side. Disordered stretches follow at residues Tyr-127–Ser-149 and Asp-173–Asp-216. Residues Arg-128–Thr-139 show a composition bias toward basic and acidic residues.

The protein belongs to the immunoglobulin superfamily. L1/neurofascin/NgCAM family. In terms of tissue distribution, expressed in many postmitotic neurons in 16-36 hours embryos. Little or no expression in the olfactory placode, the anterior lateral line/acoustic ganglia complex, the posterior lateral line ganglion, late-developing hindbrain neurons and some Rohon-Beard cells in the spinal cord.

It is found in the cell membrane. The protein localises to the cell projection. It localises to the growth cone. Functionally, cell adhesion molecule with an important role in the development of the nervous system. Involved in neuron-neuron adhesion, neurite fasciculation, outgrowth of neurites, etc. Binds to axonin on neurons. The chain is Neural cell adhesion molecule L1.2 (nadl1.2) from Danio rerio (Zebrafish).